An 806-amino-acid polypeptide reads, in one-letter code: Leucine--tRNA ligase (806 aa).

A 'HIGH' region motif is present at residues 40 to 51 (PYPSGSGLHVGH). The 'KMSKS' region motif lies at 576-580 (KMSKS). Lys579 is an ATP binding site.

This sequence belongs to the class-I aminoacyl-tRNA synthetase family.

Its subcellular location is the cytoplasm. It carries out the reaction tRNA(Leu) + L-leucine + ATP = L-leucyl-tRNA(Leu) + AMP + diphosphate. The polypeptide is Leucine--tRNA ligase (Chlorobium phaeobacteroides (strain BS1)).